The chain runs to 79 residues: Defensin-like protein 3 (79 aa).

Residues 1–29 (MAKFASIITLLFAALVVFAAFEAPTMVEA) form the signal peptide. Disulfide bonds link C32–C79, C43–C64, C49–C73, and C53–C75.

The protein belongs to the DEFL family.

The protein resides in the secreted. Functionally, possesses antifungal activity sensitive to inorganic cations. The polypeptide is Defensin-like protein 3 (AFP3) (Brassica napus (Rape)).